The primary structure comprises 154 residues: Transcriptional repressor NrdR (154 aa).

The segment at 3–34 is a zinc-finger region; it reads CPFCGAHDTKVIDSRLVAEGDQVRRRRECLAC. An ATP-cone domain is found at 49-139; that stretch reads PRLIKQDGSR…VYRRFQDLNE (91 aa).

It belongs to the NrdR family. It depends on Zn(2+) as a cofactor.

Its function is as follows. Negatively regulates transcription of bacterial ribonucleotide reductase nrd genes and operons by binding to NrdR-boxes. The polypeptide is Transcriptional repressor NrdR (Pseudomonas aeruginosa (strain LESB58)).